The primary structure comprises 418 residues: MPNPKKTVNWSHLWLYVSPPILGGIIGYFTNDIAIKMLFRPYRAIYIGGRRVPFTPGLIPRNQERLAKNISDTIMGSLLTPDELQKLARRLLKTERVQGAILWLLQLAIDQIKTDTDKKSAKIVAGILRDLIGESLPRLLKVLARREDFLEAQINQIFDQILLELQLSEEQASRLADWFLEVVLPPDVIRQAIVDFLTDRTIQIIDESFREKTSGTYWVVANLFGLRNTLTRLRTFCLDEKEATNNRLTELIQDLQMRDRFRKILQNLTLQNLPIGTVRQLRKTTRETVRQYVQTSGSDLLQGLTDSINWENIAELLLNRLSNSPVVISSLEVVSQELALILERYLEKDLEAIVAQVIPILSIDQVIVDRVKSTSPADLEAAIEGIVKNELQAIVSLGGILGLIVGLFQTAFFIFSQQ.

Helical transmembrane passes span 10–30 (WSHLWLYVSPPILGGIIGYFT) and 394–414 (IVSLGGILGLIVGLFQTAFFI).

The protein belongs to the UPF0754 family.

The protein localises to the cell inner membrane. The chain is UPF0754 membrane protein alr5253 from Nostoc sp. (strain PCC 7120 / SAG 25.82 / UTEX 2576).